The following is a 330-amino-acid chain: uncharacterized protein (330 aa).

The next 10 helical transmembrane spans lie at 27 to 47 (MGAY…VVVG), 56 to 76 (VFLS…MLLF), 90 to 110 (VFVL…CLLY), 119 to 139 (ESGI…FFLL), 147 to 167 (TLIG…FGAG), 176 to 196 (LFGN…TLMA), 206 to 226 (LAIS…FALF), 243 to 263 (YVLY…YSGV), 270 to 290 (VSGI…GVIL), and 294 to 314 (FEFV…VTVI). EamA domains lie at 38 to 163 (AIVG…AINL) and 187 to 314 (IGEA…VTVI).

Belongs to the EamA transporter family.

It is found in the cell membrane. This is an uncharacterized protein from Bacillus subtilis (strain 168).